The following is a 149-amino-acid chain: Large ribosomal subunit protein uL13 (149 aa).

Belongs to the universal ribosomal protein uL13 family. As to quaternary structure, part of the 50S ribosomal subunit.

This protein is one of the early assembly proteins of the 50S ribosomal subunit, although it is not seen to bind rRNA by itself. It is important during the early stages of 50S assembly. This is Large ribosomal subunit protein uL13 from Borrelia duttonii (strain Ly).